The following is a 515-amino-acid chain: Maturase K (515 aa).

It belongs to the intron maturase 2 family. MatK subfamily.

Its subcellular location is the plastid. The protein resides in the chloroplast. Its function is as follows. Usually encoded in the trnK tRNA gene intron. Probably assists in splicing its own and other chloroplast group II introns. The sequence is that of Maturase K from Pinus leiophylla (Chihuahua pine).